The sequence spans 182 residues: Glutamyl-tRNA(Gln) amidotransferase subunit F, mitochondrial (182 aa).

This sequence belongs to the GatF family. As to quaternary structure, subunit of the heterotrimeric GatFAB amidotransferase (AdT) complex, composed of A, B and F subunits.

It localises to the mitochondrion inner membrane. It carries out the reaction L-glutamyl-tRNA(Gln) + L-glutamine + ATP + H2O = L-glutaminyl-tRNA(Gln) + L-glutamate + ADP + phosphate + H(+). Its function is as follows. Allows the formation of correctly charged Gln-tRNA(Gln) through the transamidation of misacylated Glu-tRNA(Gln) in the mitochondria. The reaction takes place in the presence of glutamine and ATP through an activated gamma-phospho-Glu-tRNA(Gln). Required for proper protein synthesis within the mitochondrion. The protein is Glutamyl-tRNA(Gln) amidotransferase subunit F, mitochondrial of Candida tropicalis (strain ATCC MYA-3404 / T1) (Yeast).